The following is a 340-amino-acid chain: NAD-dependent epimerase/dehydratase terH (340 aa).

The helical transmembrane segment at 7-27 (IVPPGGLVLVTGVTGFIGSYI) threads the bilayer. Asn139 carries N-linked (GlcNAc...) asparagine glycosylation. Tyr176 is a binding site for NADP(+).

This sequence belongs to the NAD(P)-dependent epimerase/dehydratase family. Dihydroflavonol-4-reductase subfamily.

It is found in the membrane. Functionally, NAD-dependent epimerase/dehydratase; part of the gene cluster that mediates the biosynthesis of terrein, a fungal metabolite with ecological, antimicrobial, antiproliferative, and antioxidative activities. The first step in the pathway is performed by the polyketide synthase terA that produces 4-hydroxy-6-methylpyranon (4-HMP), orsellinic acid (OA), and 2,3-dehydro-6-hydroxymellein (2,3-dehydro-6-HM) by condensing acetyl-CoA with two, three, or four malonyl-CoA units, respectively. 4-HMP and OA are not pathway intermediates, but are rather shunt or side products. 2,3-dehydro-6-HM is further converted to 6-hydroxymellein (6-HM) by the 6-hydroxymellein synthase terB. The monooxygenases terC and terD, the multicopper oxidase terE and the Kelch-like protein terF are then involved in the transformation of 6-HM to terrein. Even if they are co-regulated with the other terrein cluster genes, terH and terI seem to be dispensable for terrein production; whereas one or both of the 2 transporters terG and terJ are probably required for efficient secretion of metabolites. The polypeptide is NAD-dependent epimerase/dehydratase terH (Aspergillus terreus (strain NIH 2624 / FGSC A1156)).